The following is a 126-amino-acid chain: C2H2-type zinc-finger transcription factor M5 (126 aa).

Disordered stretches follow at residues 17–52 and 103–126; these read AQPD…NDNR and EKKS…RVKD. The span at 38-48 shows a compositional bias: polar residues; that stretch reads SNGSSSGTATD. The C2H2-type 1; degenerate zinc-finger motif lies at 51 to 76; it reads NRCWDHGCNGKKFLNHSNLVRHRREN. The C2H2-type 2; degenerate zinc-finger motif lies at 83–115; that stretch reads FTCPMCGAYFSRSTARNQHLEKKSCNRVRRYSN. Over residues 115 to 126 the composition is skewed to basic and acidic residues; it reads NGRERPRPRVKD.

Belongs to the GLI C2H2-type zinc-finger protein family.

It is found in the nucleus. In terms of biological role, transcription factor that probably regulates the expression of the gene cluster that mediates the biosynthesis of squalestatin S1 (SQS1, also known as zaragozic acid A), a heavily oxidized fungal polyketide that offers potent cholesterol lowering activity by targeting squalene synthase (SS). The chain is C2H2-type zinc-finger transcription factor M5 from Phoma sp. (strain ATCC 20986 / MF5453).